Reading from the N-terminus, the 252-residue chain is Ribosome maturation factor RimP (252 aa).

Residues 188–252 (QGAAPGTEGG…PAAGPGAQDE (65 aa)) form a disordered region. Residues 208 to 224 (ARRPHQPKPKKAKKKGP) are compositionally biased toward basic residues.

The protein belongs to the RimP family.

It is found in the cytoplasm. Its function is as follows. Required for maturation of 30S ribosomal subunits. This is Ribosome maturation factor RimP from Rhodospirillum centenum (strain ATCC 51521 / SW).